Consider the following 134-residue polypeptide: Protein Turandot E (134 aa).

An N-terminal signal peptide occupies residues 1–38 (MSYTRTIHSSASILKMNSALQISCLLVVLGCLLGSGHC).

It belongs to the Turandot family.

Its subcellular location is the secreted. In terms of biological role, a humoral factor that may play a role in stress tolerance. This is Protein Turandot E from Drosophila sechellia (Fruit fly).